A 725-amino-acid polypeptide reads, in one-letter code: Exocyst complex component 8 (725 aa).

Residue S19 is modified to Phosphoserine. The interval A137 to Q159 is disordered. Residue T142 is modified to Phosphothreonine. The 101-residue stretch at Y182–R282 folds into the PH domain. Positions S285 to E328 are disordered. Residues F312–E328 are compositionally biased toward acidic residues.

This sequence belongs to the EXO84 family. In terms of assembly, the exocyst complex is composed of EXOC1, EXOC2, EXOC3, EXOC4, EXOC5, EXOC6, EXOC7 and EXOC8. Interacts (via PH domain) with GTP-bound RALA and RALB. Interacts with SH3BP1; required for the localization of both SH3BP1 and the exocyst to the leading edge of migrating cells.

It is found in the cytoplasm. The protein localises to the perinuclear region. The protein resides in the cell projection. Its subcellular location is the growth cone. Its function is as follows. Component of the exocyst complex involved in the docking of exocytic vesicles with fusion sites on the plasma membrane. The protein is Exocyst complex component 8 (EXOC8) of Homo sapiens (Human).